Consider the following 571-residue polypeptide: Chondroitin sulfate proteoglycan 5 (571 aa).

Positions 1-30 are cleaved as a signal peptide; that stretch reads MGRAGGGGPGWGPPPVLLLLGVTLVLTAGA. Residues 31-428 are Extracellular-facing; that stretch reads VPAREAGSAI…SIITDFQVMC (398 aa). Ser-38 carries an O-linked (Xyl...) (chondroitin sulfate) serine glycan. Asn-57 is a glycosylation site (N-linked (GlcNAc...) asparagine). Residues 57–91 are disordered; that stretch reads NDTREEAGLPAAGEDETSWTERGSELAAVGPGVGP. Thr-76 carries an O-linked (GalNAc...) threonine glycan. Ser-123 is a glycosylation site (O-linked (Xyl...) (chondroitin sulfate) serine). Residue Thr-132 is glycosylated (O-linked (GalNAc...) threonine). Disordered stretches follow at residues 137-169, 186-254, and 279-357; these read DEALGSSTMPPAIPEATEASGPPSPTLRDKPSL, GGST…TPSW, and DDLE…DLAT. A glycan (O-linked (GalNAc...) serine) is linked at Ser-143. Thr-144 and Thr-153 each carry an O-linked (GalNAc...) threonine glycan. 2 O-linked (GalNAc...) serine glycosylation sites follow: Ser-156 and Ser-160. O-linked (GalNAc...) threonine glycans are attached at residues Thr-162 and Thr-198. Residues 214-223 show a composition bias toward acidic residues; that stretch reads IDIDYFEGLD. Thr-240 carries an O-linked (GalNAc...) threonine glycan. The interval 270–306 is interaction with TNC and TNR; the sequence is DFYPTTSFYDDLEEEEEEEEDKDAVGGGDLEDESDLL. A compositionally biased stretch (acidic residues) spans 279–291; it reads DDLEEEEEEEEDK. 2 O-linked (GalNAc...) threonine glycosylation sites follow: Thr-318 and Thr-322. N-linked (GlcNAc...) asparagine glycosylation is present at Asn-372. The 43-residue stretch at 376–418 folds into the EGF-like domain; it reads RSVCDLFPSYCHNGGQCYLVENIGAFCRCNTQDYIWHKGMRCE. Cystine bridges form between Cys-379/Cys-392, Cys-386/Cys-402, and Cys-404/Cys-417. A helical transmembrane segment spans residues 429–449; that stretch reads VAVGSAALVLLLLFMMTVFFA. The tract at residues 447 to 465 is interaction with GOPC; it reads FFAKKLYLLKTENTKLRRT. The Cytoplasmic portion of the chain corresponds to 450–571; that stretch reads KKLYLLKTEN…EVNCLQNNLT (122 aa). Ser-472, Ser-480, Ser-488, and Ser-548 each carry phosphoserine. Positions 538 to 563 are disordered; it reads EESFNIQNSMSPKLEGGKGDQDDLEV.

As to quaternary structure, interacts with ERBB3 and GOPC. Binds TNR and probably TNC. Interacts with MDK; this interaction is independent of the presence of chondroitin sulfate chains and promotes elongation of oligodendroglial precursor-like cells. Post-translationally, N-glycosylated. O-glycosylated; contains chondroitin sulfate glycans. Part-time proteoglycan, expressed in part as a proteoglycan exhibiting chondroitin sulfate glycans and in part as a non-proteoglycan form. The relative amount of both forms depends on tissues and tissue maturation. In terms of processing, phosphorylated; in intracellular and extracellular parts. In terms of tissue distribution, expressed in cerebral cortex and cerebellum. Expressed in retina (at protein level).

It localises to the cell membrane. The protein localises to the synaptic cell membrane. The protein resides in the endoplasmic reticulum membrane. Its subcellular location is the golgi apparatus membrane. It is found in the cell surface. It localises to the secreted. May function as a growth and differentiation factor involved in neuritogenesis. May induce ERBB3 activation. This chain is Chondroitin sulfate proteoglycan 5 (Cspg5), found in Rattus norvegicus (Rat).